A 59-amino-acid chain; its full sequence is Crassipeptide cce9a (59 aa).

The propeptide occupies 1-30; that stretch reads ADNHARVAGPRAVASGRYATEKAFLQMMTR.

Contains 3 disulfide bonds. As to expression, expressed by the venom duct.

It is found in the secreted. Its function is as follows. Crassispirid snail peptide that induces sleep-like symptoms in young mice (12 and 14 days) and hyperactivity in older mice (16 days), when intracranially injected. This is Crassipeptide cce9a from Crassispira cerithina (Sea snail).